Reading from the N-terminus, the 199-residue chain is dTTP/UTP pyrophosphatase (199 aa).

Aspartate 78 (proton acceptor) is an active-site residue.

Belongs to the Maf family. YhdE subfamily. A divalent metal cation serves as cofactor.

It localises to the cytoplasm. It catalyses the reaction dTTP + H2O = dTMP + diphosphate + H(+). The catalysed reaction is UTP + H2O = UMP + diphosphate + H(+). Nucleoside triphosphate pyrophosphatase that hydrolyzes dTTP and UTP. May have a dual role in cell division arrest and in preventing the incorporation of modified nucleotides into cellular nucleic acids. This Clostridium acetobutylicum (strain ATCC 824 / DSM 792 / JCM 1419 / IAM 19013 / LMG 5710 / NBRC 13948 / NRRL B-527 / VKM B-1787 / 2291 / W) protein is dTTP/UTP pyrophosphatase.